The primary structure comprises 261 residues: MWIPLLLVALVVPAIRCERKCGECNPEKCQPPSEECLAGLVKDLCGCCYVCGRREGELCDGDFLPIPYRNRGHGPCGEYLECRPRTDLAPGDPPEAMCVCLKTETLCGSDGKTYQNECQLTEARYKQRDGLRAMHRGPCKSAPKITSPPEEASNYTGGNIAMSCEATGWPIPVFEWRVDIGDGNTIPLPSDDPKVSVQSRGGPSKYEVTSWLQLLSIQPKDDATYWCIAKNDEGESSAAARVVVLDFRGSQTSQKGRDNDL.

The first 17 residues, 1–17 (MWIPLLLVALVVPAIRC), serve as a signal peptide directing secretion. The region spanning 18 to 101 (ERKCGECNPE…DPPEAMCVCL (84 aa)) is the IGFBP N-terminal domain. Intrachain disulfides connect C21–C45, C24–C47, C29–C48, C36–C51, C59–C82, C76–C98, C100–C118, and C107–C139. A Kazal-like domain is found at 70–141 (NRGHGPCGEY…RAMHRGPCKS (72 aa)). The region spanning 143–243 (PKITSPPEEA…GESSAAARVV (101 aa)) is the Ig-like C2-type domain. N154 is a glycosylation site (N-linked (GlcNAc...) asparagine). Cysteines 164 and 227 form a disulfide.

In terms of tissue distribution, expressed by the venom gland.

It localises to the secreted. The polypeptide is Insulin-like growth factor-binding protein-related protein 1 (Cupiennius salei (American wandering spider)).